Consider the following 384-residue polypeptide: Proteinase K (384 aa).

A signal peptide spans 1–15 (MRLSVLLSLLPLALG). A propeptide spanning residues 16–105 (APAVEQRSEA…IEQDAVVTIN (90 aa)) is cleaved from the precursor. One can recognise an Inhibitor I9 domain in the interval 39 to 104 (KYIVKFKEGS…YIEQDAVVTI (66 aa)). The Peptidase S8 domain occupies 112-384 (PWGLARISST…NLLAYNNYQA (273 aa)). Thr-121 provides a ligand contact to Ca(2+). The cysteines at positions 139 and 228 are disulfide-linked. Catalysis depends on charge relay system residues Asp-144 and His-174. Pro-280, Val-282, and Asp-305 together coordinate Ca(2+). Cys-283 and Cys-354 are disulfide-bonded. The Charge relay system role is filled by Ser-329. Asp-365 contributes to the Ca(2+) binding site.

Belongs to the peptidase S8 family. It depends on Ca(2+) as a cofactor.

The enzyme catalyses Hydrolysis of keratin, and of other proteins with subtilisin-like specificity. Hydrolyzes peptide amides.. In terms of biological role, hydrolyzes keratin at aromatic and hydrophobic residues. This Parengyodontium album (Tritirachium album) protein is Proteinase K (PROK).